Reading from the N-terminus, the 299-residue chain is MESSGSSKVRWGQNRRLNFIDVRLQYDGRINRSDLMQFFDISAPQASADLGLYQQLAGDNLVYDTRQRIYLATPEFKPITKRSEATRYLNELQRLARGIVEPDESFVGYQPSTGVVVSPSRAIEADEVATLLRAIRDRVALRVRYQSMDAPEPQEWVLSPHALGFDGLRWHARAWCHARQVFRDFAIGRLDVLEHVFSAKPVDPLLDEGWNNEVTVSLVPHPGLTPSQRRVVMRDYGMVDGHCELRCRKAMLFYTLRHLNLESLAISDVPAQQHVVVENAEEVKQWMREDRDGLQHLRR.

Residues M1–E84 form a winged HTH domain region. The tract at residues A85 to V196 is WYL domain. The WYL domain maps to S120–K200. A probable ligand-binding region region spans residues Y145–R189. The tract at residues F197–R299 is WCX domain.

Homodimer.

In terms of biological role, transcriptional regulator of a CBASS antivirus system. CBASS (cyclic oligonucleotide-based antiphage signaling system) provides immunity against bacteriophage. The CD-NTase protein synthesizes cyclic nucleotides in response to infection; these serve as specific second messenger signals. The signals activate a diverse range of effectors, leading to bacterial cell death and thus abortive phage infection. A type III CBASS system, part of a CapW-Cap6-Cap8-Cap7-CdnC-NucC locus. Binds specifically to palindromes that overlap the -10 site in the promoter of cap6, found beween found between the genes for divergently transcribed capW and cap6 (cognate DNA). Probably represses transcription bidirectionally from the promoter. Mutations that make it a constitutive repressor in E.coli do not change DNA-binding affinity. The chain is DNA-binding transcriptional repressor CapW from Stenotrophomonas maltophilia (Pseudomonas maltophilia).